Reading from the N-terminus, the 470-residue chain is TNF receptor-associated factor 4 (470 aa).

Residues 18–58 (CPLCGKPMREPVQVSTCGHRFCDTCLQEFLSEGVFKCPEDQ) form an RING-type zinc finger. 3 TRAF-type zinc fingers span residues 101–154 (GHLN…EAYE), 155–208 (SHEG…DTIQ), and 209–267 (SHQY…LAMG). Lys263 participates in a covalent cross-link: Glycyl lysine isopeptide (Lys-Gly) (interchain with G-Cter in ubiquitin). The stretch at 277–310 (HLAMMCALVSRQRQELQELRRELEELSIGSDGVL) forms a coiled coil. The 156-residue stretch at 307–462 (DGVLIWKIGS…DDAVFIRASV (156 aa)) folds into the MATH domain. A Phosphoserine modification is found at Ser426.

The protein belongs to the TNF receptor-associated factor family. B subfamily. Homotrimer. Interacts with LTBR/TNFRSF3, NGFR/TNFRSF16, RPS6KB1 and TGFB1I1. Interacts with SMURF1. Interacts (via TRAF domain) with MAP3K4 (via kinase domain). Interacts with NCF1, TICAM1, IRAK1 and TRAF6, and is probably part of a complex containing TRAF4, NCF1, TICAM1, IRAK1 and TRAF6. Interacts (via MATH domain) with GP6 and GP1BB. Interacts with EGFR (via C-terminal region); this interaction promotes the formation of EGFR asymmetric dimers. Interacts with PKM; this interaction promotes PKM kinase activity. Post-translationally, polyubiquitinated, leading to its proteasomal degradation. Ubiquitinated at Lys-263 by the SCF(FBXL2) complex, leading to its degradation by the proteasome. In terms of tissue distribution, predominantly expressed in brain. Preferentially expressed by postmitotic undifferentiated neurons in developing central (CNS) and peripheral (PNS) nervous system, and in nervous tissues of sensory organs. In the embryo, protein expression was shown in brain, thymus, salivary glands and intestine. In the adult, protein expression is restricted to the brain (hippocampus and olfactory bulb).

It localises to the cytoplasm. It is found in the nucleus. The protein localises to the perinuclear region. The protein resides in the cell junction. Its subcellular location is the tight junction. It localises to the cell membrane. It is found in the cytoskeleton. The catalysed reaction is S-ubiquitinyl-[E2 ubiquitin-conjugating enzyme]-L-cysteine + [acceptor protein]-L-lysine = [E2 ubiquitin-conjugating enzyme]-L-cysteine + N(6)-ubiquitinyl-[acceptor protein]-L-lysine.. The protein operates within protein degradation; proteasomal ubiquitin-dependent pathway. In terms of biological role, adapter protein with E3 ligase activity that is involved in many diverse biological processes including cell proliferation, migration, differentiation, DNA repair, platelet activation or apoptosis. Promotes EGFR-mediated signaling by facilitating the dimerization of EGFR and downstream AKT activation thereby promoting cell proliferation. Ubiquitinates SMURF2 through 'Lys-48'-linked ubiquitin chain leading to SMURF2 degradation through the proteasome and subsequently osteogenic differentiation. Promotes 'Lys-63'-mediated ubiquitination of CHK1 which in turn activates cell cycle arrest and activation of DNA repair. In addition, promotes an atypical 'Lys-29'-linked ubiquitination at the C-terminal end of IRS1 which is crucial for insulin-like growth factor (IGF) signal transduction. Regulates activation of NF-kappa-B in response to signaling through Toll-like receptors. Required for normal skeleton development, and for normal development of the respiratory tract. Required for activation of RPS6KB1 in response to TNF signaling. Modulates TRAF6 functions. Inhibits adipogenic differentiation by activating pyruvate kinase PKM activity and subsequently the beta-catenin signaling pathway. In Mus musculus (Mouse), this protein is TNF receptor-associated factor 4 (Traf4).